Reading from the N-terminus, the 80-residue chain is Mitotic-spindle organizing protein 1 (80 aa).

The protein belongs to the MOZART1 family. Part of the gamma-tubulin complex.

The protein resides in the cytoplasm. The protein localises to the cytoskeleton. It localises to the microtubule organizing center. It is found in the spindle pole body. Required for gamma-tubulin complex recruitment to the microtubule organizing center (MTOC). In Pyricularia oryzae (strain 70-15 / ATCC MYA-4617 / FGSC 8958) (Rice blast fungus), this protein is Mitotic-spindle organizing protein 1.